The following is a 348-amino-acid chain: Fe(3+) ions import ATP-binding protein FbpC (348 aa).

The 231-residue stretch at valine 7–methionine 237 folds into the ABC transporter domain. Glycine 39–threonine 46 contacts ATP.

It belongs to the ABC transporter superfamily. Fe(3+) ion importer (TC 3.A.1.10) family. The complex is composed of two ATP-binding proteins (FbpC), two transmembrane proteins (FbpB) and a solute-binding protein (FbpA).

Its subcellular location is the cell inner membrane. The enzyme catalyses Fe(3+)(out) + ATP + H2O = Fe(3+)(in) + ADP + phosphate + H(+). Part of the ABC transporter complex FbpABC involved in Fe(3+) ions import. Responsible for energy coupling to the transport system. The sequence is that of Fe(3+) ions import ATP-binding protein FbpC from Escherichia coli (strain K12).